Consider the following 782-residue polypeptide: Coiled-coil alpha-helical rod protein 1 (782 aa).

Composition is skewed to basic and acidic residues over residues 62–74 (ERDV…EPGR) and 208–218 (ETRRAGEAKEL). Disordered stretches follow at residues 62–82 (ERDV…WGLE) and 177–218 (EQLS…AKEL). Coiled coils occupy residues 82–314 (EGSQ…ELTR), 344–437 (LMVQ…NAVS), and 498–691 (VADV…QQEG).

The protein resides in the cytoplasm. The protein localises to the nucleus. In terms of biological role, may be a regulator of keratinocyte proliferation or differentiation. This is Coiled-coil alpha-helical rod protein 1 (CCHCR1) from Pan troglodytes (Chimpanzee).